The chain runs to 341 residues: Adenine deaminase (341 aa).

Zn(2+) contacts are provided by His24, His26, and His204. The active-site Proton donor is Glu207. Asp285 is a binding site for Zn(2+). Substrate is bound at residue Asp286.

Belongs to the metallo-dependent hydrolases superfamily. Adenosine and AMP deaminases family. Adenine deaminase type 2 subfamily. The cofactor is Zn(2+).

It carries out the reaction adenine + H2O + H(+) = hypoxanthine + NH4(+). Catalyzes the hydrolytic deamination of adenine to hypoxanthine. Plays an important role in the purine salvage pathway and in nitrogen catabolism. The sequence is that of Adenine deaminase from Sphingopyxis alaskensis (strain DSM 13593 / LMG 18877 / RB2256) (Sphingomonas alaskensis).